A 918-amino-acid chain; its full sequence is E3 ubiquitin-protein ligase CBL-B-A (918 aa).

A compositionally biased stretch (low complexity) spans 1 to 18 (MASGSGSSSSTSSSALSG). A disordered region spans residues 1 to 27 (MASGSGSSSSTSSSALSGRLPGSRSAN). The interval 46 to 178 (PPKQAAADRR…KAIFPSGQFQ (133 aa)) is 4H. A Cbl-PTB domain is found at 46 to 354 (PPKQAAADRR…GRSYNPDLTG (309 aa)). Residues 179–251 (GDNFRITKAD…FEFDIFTRLF (73 aa)) form an EF-hand-like region. Ca(2+) is bound by residues D232, T234, N236, Y238, and E243. The segment at 252-354 (QPWGSILRNW…GRSYNPDLTG (103 aa)) is SH2-like. R297 serves as a coordination point for 4-O-phospho-L-tyrosine. The segment at 355–383 (LCEPTPHDHIKVTQEQYELYCEMGSTFQL) is linker. The segment at 384–423 (CKICAENDKDVKIEPCGHLMCTSCLTSWQESDGQGCPFCR) adopts an RING-type zinc-finger fold. Disordered regions lie at residues 481 to 582 (NERQ…RTCR), 780 to 831 (FPPA…PPAR), and 857 to 918 (HSDP…MRPT). Residues 483–497 (RQNSPVTSPGSSPLS) are compositionally biased toward polar residues. 2 stretches are compositionally biased toward pro residues: residues 554–576 (LPAP…PIPP) and 821–830 (PSQPPPPPPA). Over residues 898 to 918 (KASNTKGELLLPNQNLIMRPT) the composition is skewed to polar residues.

As to quaternary structure, interacts with several SH3 domain-containing proteins and with poly-ubiquitinated proteins.

The protein localises to the cytoplasm. It carries out the reaction S-ubiquitinyl-[E2 ubiquitin-conjugating enzyme]-L-cysteine + [acceptor protein]-L-lysine = [E2 ubiquitin-conjugating enzyme]-L-cysteine + N(6)-ubiquitinyl-[acceptor protein]-L-lysine.. It functions in the pathway protein modification; protein ubiquitination. Functionally, E3 ubiquitin-protein ligase which accepts ubiquitin from specific E2 ubiquitin-conjugating enzymes, and transfers it to substrates, generally promoting their degradation by the proteasome. The chain is E3 ubiquitin-protein ligase CBL-B-A (cblb-a) from Xenopus laevis (African clawed frog).